Consider the following 139-residue polypeptide: Transcription antitermination protein NusB (139 aa).

It belongs to the NusB family.

Its function is as follows. Involved in transcription antitermination. Required for transcription of ribosomal RNA (rRNA) genes. Binds specifically to the boxA antiterminator sequence of the ribosomal RNA (rrn) operons. This is Transcription antitermination protein NusB from Baumannia cicadellinicola subsp. Homalodisca coagulata.